Reading from the N-terminus, the 421-residue chain is Exoskeleton protein RP43 (421 aa).

The first 24 residues, 1-24 (MRVIFVISLVSFMFVTWQTNPVHC), serve as a signal peptide directing secretion. Disulfide bonds link Cys72–Cys104, Cys132–Cys154, Cys193–Cys219, Cys247–Cys269, Cys309–Cys335, and Cys362–Cys384. 3 CUB domains span residues 72 to 191 (CSKP…YSIV), 193 to 306 (CNSL…YSVP), and 309 to 421 (CSVV…YTTG).

In terms of tissue distribution, detected in vestimentum and trunk but not in opisthosome or obturaculum. In the vestimentum, expression is restricted to epithelial cells under apical cuticular plaques.

May play a role in protein-protein interactions during tube assembly. The protein is Exoskeleton protein RP43 of Riftia pachyptila (Vent tube worm).